Reading from the N-terminus, the 461-residue chain is MNTDLAAGKMASAACSMDPIDSFELLDLLFDRQDGILRHVELGEGWGHVKDQQVLPNPDSDDFLSSILGSGDSLPSSPLWSPEGSDSGISEDLPSDPQDTPPRSGPATSPAGCHPAQPGKGPCLSYHPGNSCSTTTPGPVIQVPEASVTIDLEMWSPGGRICAEKPADPVDLSPRCNLTVKDLLLSGSSGDLQQHHLGASYLLRPGAGHCQELVLTEDEKKLLAKEGITLPTQLPLTKYEERVLKKIRRKIRNKQSAQESRKKKKEYIDGLETRMSACTAQNQELQRKVLHLEKQNLSLLEQLKKLQAIVVQSTSKSAQTGTCVAVLLLSFALIILPSISPFGPNKTESPGDFAPVRVFSRTLHNDAASRVAADAVPGSEAPGPRPEADTTREESPGSPGADWGFQDTANLTNSTEELDNATLVLRNATEGLGQVALLDWVAPGPSTGSGRAGLEAAGDEL.

At 1–322 (MNTDLAAGKM…STSKSAQTGT (322 aa)) the chain is on the cytoplasmic side. Positions 51–120 (DQQVLPNPDS…AGCHPAQPGK (70 aa)) are disordered. The span at 63 to 85 (FLSSILGSGDSLPSSPLWSPEGS) shows a compositional bias: low complexity. The residue at position 173 (Ser173) is a Phosphoserine. The bZIP domain occupies 243–306 (VLKKIRRKIR…LSLLEQLKKL (64 aa)). Positions 245–274 (KKIRRKIRNKQSAQESRKKKKEYIDGLETR) are basic motif. The leucine-zipper stretch occupies residues 285–306 (LQRKVLHLEKQNLSLLEQLKKL). Lys294 participates in a covalent cross-link: Glycyl lysine isopeptide (Lys-Gly) (interchain with G-Cter in ubiquitin). A helical; Signal-anchor for type II membrane protein membrane pass occupies residues 323-343 (CVAVLLLSFALIILPSISPFG). Residues 344-461 (PNKTESPGDF…AGLEAAGDEL (118 aa)) lie on the Lumenal side of the membrane. Residues 370–408 (RVAADAVPGSEAPGPRPEADTTREESPGSPGADWGFQDT) form a disordered region. An O-linked (GalNAc...) serine glycan is attached at Ser379. Positions 386 to 395 (PEADTTREES) are enriched in basic and acidic residues. Residues Asn410, Asn413, Asn420, and Asn427 are each glycosylated (N-linked (GlcNAc...) asparagine). Residues 442 to 461 (APGPSTGSGRAGLEAAGDEL) form a disordered region.

The protein belongs to the bZIP family. ATF subfamily. Binds DNA as a dimer. May form homodimers. Interacts with ATF6. Interacts with SYNV1/HRD1; this interaction leads to CREB3L3 ubiquitination and proteasomal degradation. In terms of processing, controlled by regulated intramembrane proteolysis (RIP). Following ER stress a fragment containing the cytoplasmic transcription factor domain is released by proteolysis. The cleavage seems to be performed sequentially by site-1 and site-2 proteases (PS1 and PS2). Post-translationally, N- and O-glycosylated. N-glycosylation is required for optimal proteolytic activation. O-glycosylated with core 1 or possibly core 8 glycans. Ubiquitinated at Lys-294 by SYNV1/HRD1 via 'Lys-27'-linked ubiquitin. In terms of tissue distribution, exclusively expressed in liver. Underexpressed in hepatocellular carcinoma tissues.

It localises to the endoplasmic reticulum membrane. Its subcellular location is the nucleus. In terms of biological role, transcription factor that may act during endoplasmic reticulum stress by activating unfolded protein response target genes. Activated in response to cAMP stimulation. In vitro, binds to the cAMP response element (CRE) and box-B element. Activates transcription through box-B element. Activates transcription through CRE. May function synergistically with ATF6. In acute inflammatory response, may activate expression of acute phase response (APR) genes. May be involved in growth suppression. Regulates FGF21 transcription. Plays a crucial role in the regulation of triglyceride metabolism and is required for the maintenance of normal plasma triglyceride concentrations. The polypeptide is Cyclic AMP-responsive element-binding protein 3-like protein 3 (CREB3L3) (Homo sapiens (Human)).